Reading from the N-terminus, the 875-residue chain is Valine--tRNA ligase (875 aa).

A 'HIGH' region motif is present at residues proline 41–histidine 51. A 'KMSKS' region motif is present at residues lysine 525–serine 529. ATP is bound at residue lysine 528. Residues valine 810–leucine 875 are a coiled coil.

It belongs to the class-I aminoacyl-tRNA synthetase family. ValS type 1 subfamily. Monomer.

Its subcellular location is the cytoplasm. The enzyme catalyses tRNA(Val) + L-valine + ATP = L-valyl-tRNA(Val) + AMP + diphosphate. Catalyzes the attachment of valine to tRNA(Val). As ValRS can inadvertently accommodate and process structurally similar amino acids such as threonine, to avoid such errors, it has a 'posttransfer' editing activity that hydrolyzes mischarged Thr-tRNA(Val) in a tRNA-dependent manner. This Pelagibacter ubique (strain HTCC1062) protein is Valine--tRNA ligase.